We begin with the raw amino-acid sequence, 105 residues long: Large ribosomal subunit protein bL21 (105 aa).

The protein belongs to the bacterial ribosomal protein bL21 family. Part of the 50S ribosomal subunit. Contacts protein L20.

Functionally, this protein binds to 23S rRNA in the presence of protein L20. The chain is Large ribosomal subunit protein bL21 from Treponema pallidum (strain Nichols).